The following is a 61-amino-acid chain: Large ribosomal subunit protein bL32 (61 aa).

The span at 1–16 shows a compositional bias: basic residues; that stretch reads MAVPKRKTSPSKRGMR. Residues 1 to 40 are disordered; sequence MAVPKRKTSPSKRGMRRSADALKAPTYIEDKNSGELRRPH. Residues 28 to 40 show a composition bias toward basic and acidic residues; the sequence is IEDKNSGELRRPH.

The protein belongs to the bacterial ribosomal protein bL32 family.

This chain is Large ribosomal subunit protein bL32, found in Sinorhizobium medicae (strain WSM419) (Ensifer medicae).